The following is a 298-amino-acid chain: 4-hydroxy-tetrahydrodipicolinate synthase (298 aa).

Residue Thr48 participates in pyruvate binding. Tyr137 functions as the Proton donor/acceptor in the catalytic mechanism. The active-site Schiff-base intermediate with substrate is the Lys166. Position 207 (Ile207) interacts with pyruvate.

This sequence belongs to the DapA family. As to quaternary structure, homotetramer; dimer of dimers.

Its subcellular location is the cytoplasm. The catalysed reaction is L-aspartate 4-semialdehyde + pyruvate = (2S,4S)-4-hydroxy-2,3,4,5-tetrahydrodipicolinate + H2O + H(+). It functions in the pathway amino-acid biosynthesis; L-lysine biosynthesis via DAP pathway; (S)-tetrahydrodipicolinate from L-aspartate: step 3/4. Functionally, catalyzes the condensation of (S)-aspartate-beta-semialdehyde [(S)-ASA] and pyruvate to 4-hydroxy-tetrahydrodipicolinate (HTPA). This is 4-hydroxy-tetrahydrodipicolinate synthase from Campylobacter jejuni subsp. doylei (strain ATCC BAA-1458 / RM4099 / 269.97).